A 247-amino-acid polypeptide reads, in one-letter code: UPF0246 protein LSL_1719 (247 aa).

It belongs to the UPF0246 family.

This is UPF0246 protein LSL_1719 from Ligilactobacillus salivarius (strain UCC118) (Lactobacillus salivarius).